Consider the following 172-residue polypeptide: MERAEKREFVTELNEVFKASGSVVVAHYAGATVAQMNDFRSKMRAAGGTVKVAKNRLAKIALQGTEAEGMSNLFKGQTLIAYSTDPITAPKVVMDFAKTNDKIIVLGGAMGTTTLNADAVKSLATLPSLDELRAKLLGMIQTPATRIAGVVAAPASQLARVFAAYAKKDEAA.

Belongs to the universal ribosomal protein uL10 family. In terms of assembly, part of the ribosomal stalk of the 50S ribosomal subunit. The N-terminus interacts with L11 and the large rRNA to form the base of the stalk. The C-terminus forms an elongated spine to which L12 dimers bind in a sequential fashion forming a multimeric L10(L12)X complex.

Its function is as follows. Forms part of the ribosomal stalk, playing a central role in the interaction of the ribosome with GTP-bound translation factors. The protein is Large ribosomal subunit protein uL10 of Rhizobium johnstonii (strain DSM 114642 / LMG 32736 / 3841) (Rhizobium leguminosarum bv. viciae).